The primary structure comprises 326 residues: Flap endonuclease 1 (326 aa).

Residues 1–98 (MGVQFGDFIP…KTRKVRREMK (98 aa)) are N-domain. 7 residues coordinate Mg(2+): Asp27, Asp80, Glu152, Glu154, Asp173, Asp175, and Asp224. Residues 116-245 (EAAKYAKRVS…KRAYELVRSG (130 aa)) form an I-domain region. An interaction with PCNA region spans residues 317 to 325 (KQKTLDAWF).

The protein belongs to the XPG/RAD2 endonuclease family. FEN1 subfamily. In terms of assembly, interacts with PCNA. PCNA stimulates the nuclease activity without altering cleavage specificity. It depends on Mg(2+) as a cofactor.

Structure-specific nuclease with 5'-flap endonuclease and 5'-3' exonuclease activities involved in DNA replication and repair. During DNA replication, cleaves the 5'-overhanging flap structure that is generated by displacement synthesis when DNA polymerase encounters the 5'-end of a downstream Okazaki fragment. Binds the unpaired 3'-DNA end and kinks the DNA to facilitate 5' cleavage specificity. Cleaves one nucleotide into the double-stranded DNA from the junction in flap DNA, leaving a nick for ligation. Also involved in the base excision repair (BER) pathway. Acts as a genome stabilization factor that prevents flaps from equilibrating into structures that lead to duplications and deletions. Also possesses 5'-3' exonuclease activity on nicked or gapped double-stranded DNA. The protein is Flap endonuclease 1 of Methanocaldococcus jannaschii (strain ATCC 43067 / DSM 2661 / JAL-1 / JCM 10045 / NBRC 100440) (Methanococcus jannaschii).